We begin with the raw amino-acid sequence, 637 residues long: DNA mismatch repair protein MutL (637 aa).

Polar residues predominate over residues 353-371 (GQGQRPVSSASMPSASRQA). The segment at 353–444 (GQGQRPVSSA…SEAASETPHD (92 aa)) is disordered. The segment covering 378–389 (DWIKEGVQDWDW) has biased composition (basic and acidic residues). Residues 396 to 406 (PQNPPQNPPPG) are compositionally biased toward pro residues. Residues 430-444 (SGKELSEAASETPHD) show a composition bias toward basic and acidic residues.

It belongs to the DNA mismatch repair MutL/HexB family.

Functionally, this protein is involved in the repair of mismatches in DNA. It is required for dam-dependent methyl-directed DNA mismatch repair. May act as a 'molecular matchmaker', a protein that promotes the formation of a stable complex between two or more DNA-binding proteins in an ATP-dependent manner without itself being part of a final effector complex. The protein is DNA mismatch repair protein MutL of Beijerinckia indica subsp. indica (strain ATCC 9039 / DSM 1715 / NCIMB 8712).